A 170-amino-acid polypeptide reads, in one-letter code: Transcriptional repressor NrdR (170 aa).

A zinc finger spans residues 3–34 (CPFCRHPDSRVVDSRTTDDGTSIRRRRQCPDC). The ATP-cone domain occupies 46–136 (LMVVKRSGVT…VYRAFDSLED (91 aa)). A disordered region spans residues 148–170 (RPSAEDRGSGETLEVPAPAIAAD).

It belongs to the NrdR family. The cofactor is Zn(2+).

Functionally, negatively regulates transcription of bacterial ribonucleotide reductase nrd genes and operons by binding to NrdR-boxes. This is Transcriptional repressor NrdR from Streptomyces griseus subsp. griseus (strain JCM 4626 / CBS 651.72 / NBRC 13350 / KCC S-0626 / ISP 5235).